A 141-amino-acid chain; its full sequence is 3-hydroxyacyl-[acyl-carrier-protein] dehydratase FabZ (141 aa).

His-47 is an active-site residue.

This sequence belongs to the thioester dehydratase family. FabZ subfamily.

It is found in the cytoplasm. The catalysed reaction is a (3R)-hydroxyacyl-[ACP] = a (2E)-enoyl-[ACP] + H2O. In terms of biological role, involved in unsaturated fatty acids biosynthesis. Catalyzes the dehydration of short chain beta-hydroxyacyl-ACPs and long chain saturated and unsaturated beta-hydroxyacyl-ACPs. This Caldanaerobacter subterraneus subsp. tengcongensis (strain DSM 15242 / JCM 11007 / NBRC 100824 / MB4) (Thermoanaerobacter tengcongensis) protein is 3-hydroxyacyl-[acyl-carrier-protein] dehydratase FabZ.